Consider the following 240-residue polypeptide: Proteasome subunit alpha (240 aa).

It belongs to the peptidase T1A family. The 20S proteasome core is composed of 14 alpha and 14 beta subunits that assemble into four stacked heptameric rings, resulting in a barrel-shaped structure. The two inner rings, each composed of seven catalytic beta subunits, are sandwiched by two outer rings, each composed of seven alpha subunits. The catalytic chamber with the active sites is on the inside of the barrel. Has a gated structure, the ends of the cylinder being occluded by the N-termini of the alpha-subunits. Is capped at one or both ends by the proteasome regulatory ATPase, PAN.

The protein resides in the cytoplasm. Its activity is regulated as follows. The formation of the proteasomal ATPase PAN-20S proteasome complex, via the docking of the C-termini of PAN into the intersubunit pockets in the alpha-rings, triggers opening of the gate for substrate entry. Interconversion between the open-gate and close-gate conformations leads to a dynamic regulation of the 20S proteasome proteolysis activity. In terms of biological role, component of the proteasome core, a large protease complex with broad specificity involved in protein degradation. The sequence is that of Proteasome subunit alpha from Metallosphaera sedula (strain ATCC 51363 / DSM 5348 / JCM 9185 / NBRC 15509 / TH2).